Here is a 677-residue protein sequence, read N- to C-terminus: Secretogranin-1 (677 aa).

The first 20 residues, Met-1–Ser-20, serve as a signal peptide directing secretion. Residues Cys-36 and Cys-57 are joined by a disulfide bond. 2 disordered regions span residues Lys-63–Glu-505 and Asn-531–Thr-558. A compositionally biased stretch (basic and acidic residues) spans Ser-64–Ala-90. Residues Ser-93, Ser-99, and Ser-100 each carry the phosphoserine modification. Ser-93 carries O-linked (Xyl...) (chondroitin sulfate) serine glycosylation. O-linked (GalNAc...) threonine glycosylation is present at Thr-115. Positions Gly-118 to Val-133 are enriched in basic and acidic residues. Residues Ser-129, Ser-147, Ser-190, and Ser-220 each carry the phosphoserine modification. Basic and acidic residues-rich tracts occupy residues Lys-148–Glu-192 and Lys-200–Glu-249. The O-linked (Xyl...) (chondroitin sulfate) serine glycan is linked to Ser-237. The span at Thr-251 to Ala-280 shows a compositional bias: acidic residues. 6 positions are modified to phosphoserine: Ser-256, Ser-260, Ser-300, Ser-301, Ser-318, and Ser-342. Positions Pro-306–Asp-322 are enriched in basic and acidic residues. Tyr-348 bears the Sulfotyrosine mark. Basic and acidic residues-rich tracts occupy residues Arg-363 to Tyr-409 and Gly-421 to Lys-455. Residues Ser-365, Ser-375, and Ser-378 each carry the phosphoserine modification. Sulfotyrosine is present on Tyr-472. The span at Glu-491–Tyr-504 shows a compositional bias: basic and acidic residues. Residues Ser-493, Ser-532, and Ser-543 each carry the phosphoserine modification. Residues Tyr-566 and Tyr-624 each carry the sulfotyrosine modification. The disordered stretch occupies residues Asp-622–Arg-646. At Ser-626 the chain carries Phosphoserine. Basic and acidic residues predominate over residues Glu-635–Arg-646.

It belongs to the chromogranin/secretogranin protein family. Interacts with ITPR1 in the secretory granules.

It is found in the secreted. Functionally, secretogranin-1 is a neuroendocrine secretory granule protein, which may be the precursor for other biologically active peptides. In Mus musculus (Mouse), this protein is Secretogranin-1 (Chgb).